The following is a 2040-amino-acid chain: Apolipoprotein(a) (2040 aa).

An N-terminal signal peptide occupies residues 1-19 (MEHKEVVLLLLLFLKSAAP). Kringle domains follow at residues 27-105 (DCYH…LTQC), 141-219 (ECYH…LTQC), 255-333 (ECYH…LTQC), 369-447 (ECYH…LTQC), 483-561 (ECYH…LTQC), 597-675 (ECYH…LTQC), 711-789 (ECYH…LTQC), 825-903 (ECYH…LTQC), 939-1017 (ECYH…LTRC), and 1053-1131 (DCYY…LTQC). 30 cysteine pairs are disulfide-bonded: Cys28-Cys105, Cys49-Cys88, Cys77-Cys100, Cys142-Cys219, Cys163-Cys202, Cys191-Cys214, Cys256-Cys333, Cys277-Cys316, Cys305-Cys328, Cys370-Cys447, Cys391-Cys430, Cys419-Cys442, Cys484-Cys561, Cys505-Cys544, Cys533-Cys556, Cys598-Cys675, Cys619-Cys658, Cys647-Cys670, Cys712-Cys789, Cys733-Cys772, Cys761-Cys784, Cys826-Cys903, Cys847-Cys886, Cys875-Cys898, Cys940-Cys1017, Cys961-Cys1000, Cys989-Cys1012, Cys1054-Cys1131, Cys1075-Cys1114, and Cys1103-Cys1126. Asn61 is a glycosylation site (N-linked (GlcNAc...) asparagine). The N-linked (GlcNAc...) asparagine glycan is linked to Asn101. A glycan (N-linked (GlcNAc...) asparagine) is linked at Asn215. An N-linked (GlcNAc...) asparagine glycan is attached at Asn329. N-linked (GlcNAc...) asparagine glycosylation is present at Asn443. Asn557 is a glycosylation site (N-linked (GlcNAc...) asparagine). Asn671 carries N-linked (GlcNAc...) asparagine glycosylation. The N-linked (GlcNAc...) asparagine glycan is linked to Asn785. N-linked (GlcNAc...) asparagine glycosylation occurs at Asn899. N-linked (GlcNAc...) asparagine glycosylation occurs at Asn1013. N-linked (GlcNAc...) asparagine glycosylation occurs at Asn1127. The interval 1147 to 1166 (DPSTEASSEEAPTEQSPGVQ) is disordered. 2 Kringle domains span residues 1167–1245 (DCYH…LTQC) and 1273–1351 (DCYH…LTQC). 6 disulfides stabilise this stretch: Cys1168-Cys1245, Cys1189-Cys1228, Cys1217-Cys1240, Cys1274-Cys1351, Cys1295-Cys1334, and Cys1323-Cys1346. A glycan (N-linked (GlcNAc...) asparagine) is linked at Asn1241. Asn1347 and Asn1381 each carry an N-linked (GlcNAc...) asparagine glycan. Residues 1365–1388 (VPVPSTELPSEEAPTENSTGVQDC) are disordered. Positions 1387-1465 (DCYRGDGQSY…RWEYCNLTRC (79 aa)) constitute a Kringle 13 domain. Cystine bridges form between Cys1388/Cys1465, Cys1409/Cys1448, and Cys1437/Cys1460. Asn1461 is a glycosylation site (N-linked (GlcNAc...) asparagine). The disordered stretch occupies residues 1476-1497 (PTVAPVPSTEAPSEQAPPEKSP). Kringle domains lie at 1501–1579 (DCYH…LTQC), 1615–1693 (QCYH…LTRC), and 1719–1799 (DCMF…IPLC). Intrachain disulfides connect Cys1502–Cys1579, Cys1523–Cys1562, Cys1551–Cys1574, Cys1616–Cys1693, Cys1637–Cys1676, Cys1665–Cys1688, Cys1720–Cys1799, Cys1741–Cys1782, Cys1770–Cys1794, and Cys1846–Cys1862. An N-linked (GlcNAc...) asparagine glycan is attached at Asn1575. An N-linked (GlcNAc...) asparagine glycan is attached at Asn1689. Positions 1820-2038 (IVGGCVAHPH…FVTWIEGMMR (219 aa)) constitute a Peptidase S1 domain. Catalysis depends on charge relay system residues His1861 and Asp1904. 3 disulfides stabilise this stretch: Cys1938–Cys1996, Cys1968–Cys1975, and Cys1986–Cys2014. The active-site Charge relay system is the Ser1990.

This sequence belongs to the peptidase S1 family. Plasminogen subfamily. As to quaternary structure, disulfide-linked to apo-B100. Binds to fibronectin and decorin. Post-translationally, N- and O-glycosylated. The N-glycans are complex biantennary structures present in either a mono- or disialylated state. The O-glycans are mostly (80%) represented by the monosialylated core type I structure, NeuNAcalpha2-3Galbeta1-3GalNAc, with smaller amounts of disialylated and non-sialylated O-glycans also detected.

In terms of biological role, apo(a) is the main constituent of lipoprotein(a) (Lp(a)). It has serine proteinase activity and is able of autoproteolysis. Inhibits tissue-type plasminogen activator 1. Lp(a) may be a ligand for megalin/Gp 330. The protein is Apolipoprotein(a) (LPA) of Homo sapiens (Human).